A 115-amino-acid chain; its full sequence is Tyrosine-protein phosphatase 22 (115 aa).

Residues 1–115 (WLMIVEQKCR…ETGGDAPMVV (115 aa)) enclose the Tyrosine-protein phosphatase domain. Position 83 (D83) interacts with substrate.

This sequence belongs to the protein-tyrosine phosphatase family.

The catalysed reaction is O-phospho-L-tyrosyl-[protein] + H2O = L-tyrosyl-[protein] + phosphate. This Styela plicata (Wrinkled sea squirt) protein is Tyrosine-protein phosphatase 22 (STY-22).